Reading from the N-terminus, the 405-residue chain is MADVNKVVLAYSGGLDTSVILKWLQDTYNCEVVTFTADLGQGEEVEPARAKAQAMGVKEIYIDDLREEFVRDFVFPMFRANTVYEGEYLLGTSIARPLIAKRLIEIANETGADAISHGATGKGNDQVRFELGAYALKPGVKVIAPWREWDLLSREKLMDYAEKHGIPIERHGKKKSPYSMDANLLHISYEGGVLEDTWTEHEEDMWRWTVSPEKAPDTPQYLELTYRNGDIVALDGVEMTPATVLATLNRIGGEHGIGRLDIVENRYVGMKSRGCYETPGGTIMLRAHRAIESITLDREVAHLKDELMPKYASLIYTGYWWSPERLMLQQMIDASQAHVNGVVRLKLYKGNVIVTGRKSDESLFDANIATFEEDGGAYNQADAAGFIKLNALRMRIAANKGRTLV.

ATP contacts are provided by residues 10 to 18 (AYSGGLDTS) and A37. L-citrulline is bound by residues Y88 and S93. An ATP-binding site is contributed by G118. Residues T120, N124, and D125 each coordinate L-aspartate. N124 lines the L-citrulline pocket. The L-citrulline site is built by R128, S179, S188, E264, and Y276.

This sequence belongs to the argininosuccinate synthase family. Type 1 subfamily. In terms of assembly, homotetramer.

It localises to the cytoplasm. The enzyme catalyses L-citrulline + L-aspartate + ATP = 2-(N(omega)-L-arginino)succinate + AMP + diphosphate + H(+). The protein operates within amino-acid biosynthesis; L-arginine biosynthesis; L-arginine from L-ornithine and carbamoyl phosphate: step 2/3. The protein is Argininosuccinate synthase of Pseudomonas fluorescens (strain ATCC BAA-477 / NRRL B-23932 / Pf-5).